The primary structure comprises 152 residues: 17.1 kDa class II heat shock protein (152 aa).

Residues Asp-36–Ala-152 enclose the sHSP domain.

This sequence belongs to the small heat shock protein (HSP20) family.

The protein resides in the cytoplasm. The polypeptide is 17.1 kDa class II heat shock protein (HSP17.7) (Pisum sativum (Garden pea)).